A 309-amino-acid chain; its full sequence is Ribonuclease Z (309 aa).

Residues histidine 63, histidine 65, aspartate 67, histidine 68, histidine 141, aspartate 212, and histidine 270 each coordinate Zn(2+). Aspartate 67 functions as the Proton acceptor in the catalytic mechanism.

The protein belongs to the RNase Z family. As to quaternary structure, homodimer. Zn(2+) is required as a cofactor.

The enzyme catalyses Endonucleolytic cleavage of RNA, removing extra 3' nucleotides from tRNA precursor, generating 3' termini of tRNAs. A 3'-hydroxy group is left at the tRNA terminus and a 5'-phosphoryl group is left at the trailer molecule.. Zinc phosphodiesterase, which displays some tRNA 3'-processing endonuclease activity. Probably involved in tRNA maturation, by removing a 3'-trailer from precursor tRNA. The sequence is that of Ribonuclease Z from Lactobacillus gasseri (strain ATCC 33323 / DSM 20243 / BCRC 14619 / CIP 102991 / JCM 1131 / KCTC 3163 / NCIMB 11718 / NCTC 13722 / AM63).